A 286-amino-acid chain; its full sequence is Formamidopyrimidine-DNA glycosylase (286 aa).

Proline 2 functions as the Schiff-base intermediate with DNA in the catalytic mechanism. Glutamate 3 functions as the Proton donor in the catalytic mechanism. The active-site Proton donor; for beta-elimination activity is the lysine 61. DNA contacts are provided by histidine 96, arginine 115, and lysine 161. The segment at 247–281 (EAYGREGEPCRRCGRAMRREAFMNRSSYFCPSCQR) adopts an FPG-type zinc-finger fold. Arginine 271 serves as the catalytic Proton donor; for delta-elimination activity.

This sequence belongs to the FPG family. As to quaternary structure, monomer. Zn(2+) is required as a cofactor.

It catalyses the reaction Hydrolysis of DNA containing ring-opened 7-methylguanine residues, releasing 2,6-diamino-4-hydroxy-5-(N-methyl)formamidopyrimidine.. It carries out the reaction 2'-deoxyribonucleotide-(2'-deoxyribose 5'-phosphate)-2'-deoxyribonucleotide-DNA = a 3'-end 2'-deoxyribonucleotide-(2,3-dehydro-2,3-deoxyribose 5'-phosphate)-DNA + a 5'-end 5'-phospho-2'-deoxyribonucleoside-DNA + H(+). Functionally, involved in base excision repair of DNA damaged by oxidation or by mutagenic agents. Acts as a DNA glycosylase that recognizes and removes damaged bases. Has a preference for oxidized purines, such as 7,8-dihydro-8-oxoguanine (8-oxoG). Has AP (apurinic/apyrimidinic) lyase activity and introduces nicks in the DNA strand. Cleaves the DNA backbone by beta-delta elimination to generate a single-strand break at the site of the removed base with both 3'- and 5'-phosphates. The protein is Formamidopyrimidine-DNA glycosylase of Mycobacteroides abscessus (strain ATCC 19977 / DSM 44196 / CCUG 20993 / CIP 104536 / JCM 13569 / NCTC 13031 / TMC 1543 / L948) (Mycobacterium abscessus).